The primary structure comprises 257 residues: Global transcriptional regulator CodY (257 aa).

The tract at residues 1–155 (MSLLSKTREL…AATVIGMEIL (155 aa)) is GAF domain. The segment at residues 203-222 (ASKVADRVGITRSVIVNALR) is a DNA-binding region (H-T-H motif).

The protein belongs to the CodY family.

It localises to the cytoplasm. Its function is as follows. DNA-binding global transcriptional regulator which is involved in the adaptive response to starvation and acts by directly or indirectly controlling the expression of numerous genes in response to nutrient availability. During rapid exponential growth, CodY is highly active and represses genes whose products allow adaptation to nutrient depletion. The sequence is that of Global transcriptional regulator CodY from Staphylococcus epidermidis (strain ATCC 12228 / FDA PCI 1200).